The following is a 340-amino-acid chain: S-adenosylmethionine:tRNA ribosyltransferase-isomerase (340 aa).

It belongs to the QueA family. Monomer.

It localises to the cytoplasm. It catalyses the reaction 7-aminomethyl-7-carbaguanosine(34) in tRNA + S-adenosyl-L-methionine = epoxyqueuosine(34) in tRNA + adenine + L-methionine + 2 H(+). It functions in the pathway tRNA modification; tRNA-queuosine biosynthesis. Its function is as follows. Transfers and isomerizes the ribose moiety from AdoMet to the 7-aminomethyl group of 7-deazaguanine (preQ1-tRNA) to give epoxyqueuosine (oQ-tRNA). This Francisella tularensis subsp. holarctica (strain OSU18) protein is S-adenosylmethionine:tRNA ribosyltransferase-isomerase.